Reading from the N-terminus, the 146-residue chain is Arginine repressor (146 aa).

Belongs to the ArgR family.

The protein localises to the cytoplasm. It functions in the pathway amino-acid biosynthesis; L-arginine biosynthesis [regulation]. In terms of biological role, regulates arginine biosynthesis genes. The chain is Arginine repressor from Parabacteroides distasonis (strain ATCC 8503 / DSM 20701 / CIP 104284 / JCM 5825 / NCTC 11152).